A 308-amino-acid polypeptide reads, in one-letter code: 2-methylisocitrate lyase (308 aa).

51-53 provides a ligand contact to substrate; sequence SGA. Aspartate 90 and aspartate 92 together coordinate Mg(2+). Substrate contacts are provided by residues 127-128, arginine 160, glutamate 190, 212-214, arginine 243, and arginine 272; these read CG and NMT.

This sequence belongs to the isocitrate lyase/PEP mutase superfamily. Methylisocitrate lyase family. In terms of assembly, homotetramer; dimer of dimers. Requires Mg(2+) as cofactor.

The enzyme catalyses (2S,3R)-3-hydroxybutane-1,2,3-tricarboxylate = pyruvate + succinate. Its pathway is organic acid metabolism; propanoate degradation. In terms of biological role, involved in the catabolism of short chain fatty acids (SCFA) via the 2-methylcitrate cycle I (propionate degradation route). Catalyzes the thermodynamically favored C-C bond cleavage of (2R,3S)-2-methylisocitrate to yield pyruvate and succinate via an alpha-carboxy-carbanion intermediate. The sequence is that of 2-methylisocitrate lyase from Aeropyrum pernix (strain ATCC 700893 / DSM 11879 / JCM 9820 / NBRC 100138 / K1).